The primary structure comprises 137 residues: MRTLWIVALLLVGVEGSLLELGKMILQETGKNAITSYGSYGCNCGWGHRGQPKDATDRCCFVHKCCYKKLTDCNHKTDRYSYSWKNKAIICEEKNPCLKEMCECDKAVAICLRENLDTYNKKYKAYFKFKCKKPETC.

The signal sequence occupies residues 1-16; sequence MRTLWIVALLLVGVEG. 7 disulfides stabilise this stretch: Cys42–Cys131, Cys44–Cys60, Cys59–Cys111, Cys65–Cys137, Cys66–Cys104, Cys73–Cys97, and Cys91–Cys102. The tract at residues 121–133 is important for membrane-damaging activities in eukaryotes and bacteria; heparin-binding; it reads KKYKAYFKFKCKK.

It belongs to the phospholipase A2 family. Group II subfamily. K49 sub-subfamily. In terms of assembly, binds to heparin. In terms of tissue distribution, expressed by the venom gland.

It is found in the secreted. With respect to regulation, heparin and wedelolactone inhibit the myotoxic activity. The PLA2 inhibitor, para-bromophenacyl bromide (BPB), inhibits the myotoxic activity. In terms of biological role, snake venom phospholipase A2 homolog that lacks enzymatic activity. Has myotoxic activities. A model of myotoxic mechanism has been proposed: an apo Lys49-PLA2 is activated by the entrance of a hydrophobic molecule (e.g. fatty acid) at the hydrophobic channel of the protein leading to a reorientation of a monomer. This reorientation causes a transition between 'inactive' to 'active' states, causing alignment of C-terminal and membrane-docking sites (MDoS) side-by-side and putting the membrane-disruption sites (MDiS) in the same plane, exposed to solvent and in a symmetric position for both monomers. The MDoS region stabilizes the toxin on membrane by the interaction of charged residues with phospholipid head groups. Subsequently, the MDiS region destabilizes the membrane with penetration of hydrophobic residues. This insertion causes a disorganization of the membrane, allowing an uncontrolled influx of ions (i.e. calcium and sodium), and eventually triggering irreversible intracellular alterations and cell death. This is Basic phospholipase A2 homolog MT1 from Agkistrodon contortrix laticinctus (Broad-banded copperhead).